We begin with the raw amino-acid sequence, 401 residues long: Probable aspartate/prephenate aminotransferase (401 aa).

Gly-39, Trp-125, and Asn-175 together coordinate L-aspartate. N6-(pyridoxal phosphate)lysine is present on Lys-239. An L-aspartate-binding site is contributed by Arg-375.

The protein belongs to the class-I pyridoxal-phosphate-dependent aminotransferase family. Homodimer. Pyridoxal 5'-phosphate serves as cofactor.

Its subcellular location is the cytoplasm. The enzyme catalyses L-aspartate + 2-oxoglutarate = oxaloacetate + L-glutamate. The catalysed reaction is L-arogenate + 2-oxoglutarate = prephenate + L-glutamate. Functionally, catalyzes the reversible conversion of aspartate and 2-oxoglutarate to glutamate and oxaloacetate. Can also transaminate prephenate in the presence of glutamate. This is Probable aspartate/prephenate aminotransferase (aatA) from Rickettsia conorii (strain ATCC VR-613 / Malish 7).